The sequence spans 359 residues: MPAHLLQEEISSSYTTTTTITAPPSRVLQNGGGKLEKTPLYLEEDIRPEMRDDIYDPNYQDKEGPKPKLEYVWRNIILMGLLHLGALYGITLIPTCKIYTFLWVLFYYVISALGITAGVHRLWSHRTYKARLPLRVFLIIANTMAFQNDVFEWSRDHRAHHKFSETDADPHNSRRGFFFSHVGWLLVRKHPAVREKGATLDLSDLRAEKLVMFQRRYYKPGVLLLCFILPTLVPWYLWGESFQNSLFFATFLRYAVVLNATWLVNSAAHMYGYRPYDKTINPRENILVSLGAVGEGFHNYHHTFPYDYSASEYRWHINFTTFFIDCMAAIGLAYDRKKVSKAAVLGRMKRTGEESYKSG.

Topologically, residues methionine 1 to valine 72 are cytoplasmic. Residues tryptophan 73–isoleucine 93 traverse the membrane as a helical segment. Asparagine 75 is a substrate binding site. Topologically, residues proline 94 to lysine 97 are lumenal. Residues isoleucine 98 to glycine 118 traverse the membrane as a helical segment. The Cytoplasmic segment spans residues valine 119–tyrosine 217. Positions 120 and 125 each coordinate Fe cation. The Histidine box-1 signature appears at histidine 120 to histidine 125. 3 residues coordinate substrate: asparagine 148, arginine 155, and aspartate 156. Residues histidine 157, histidine 160, and histidine 161 each contribute to the Fe cation site. Residues histidine 157 to histidine 161 carry the Histidine box-2 motif. Substrate is bound by residues arginine 188 and lysine 189. Residue serine 203 is modified to Phosphoserine. A helical transmembrane segment spans residues tyrosine 218–leucine 237. Topologically, residues tryptophan 238–serine 241 are lumenal. A helical transmembrane segment spans residues phenylalanine 242 to leucine 263. A substrate-binding site is contributed by tryptophan 262. Topologically, residues valine 264–glycine 359 are cytoplasmic. Fe cation is bound by residues histidine 269, histidine 298, histidine 301, and histidine 302. Residues histidine 298–histidine 302 carry the Histidine box-3 motif.

It belongs to the fatty acid desaturase type 1 family. It depends on Fe(2+) as a cofactor.

Its subcellular location is the endoplasmic reticulum membrane. The catalysed reaction is octadecanoyl-CoA + 2 Fe(II)-[cytochrome b5] + O2 + 2 H(+) = (9Z)-octadecenoyl-CoA + 2 Fe(III)-[cytochrome b5] + 2 H2O. Stearoyl-CoA desaturase that utilizes O(2) and electrons from reduced cytochrome b5 to introduce the first double bond into saturated fatty acyl-CoA substrates. Catalyzes the insertion of a cis double bond at the delta-9 position into fatty acyl-CoA substrates including palmitoyl-CoA and stearoyl-CoA. Gives rise to a mixture of 16:1 and 18:1 unsaturated fatty acids. Plays an important role in lipid biosynthesis. Plays an important role in regulating the expression of genes that are involved in lipogenesis and in regulating mitochondrial fatty acid oxidation. Plays an important role in body energy homeostasis. Contributes to the biosynthesis of membrane phospholipids, cholesterol esters and triglycerides. In Ovis aries (Sheep), this protein is Acyl-CoA desaturase (SCD).